Here is a 623-residue protein sequence, read N- to C-terminus: MDLRAKHGLTLLEQLNRMRDAEQLTDVVLVAEGVSFPCHRAVLSAFSPYFRVMFTCGLRECSNRQVVLRDMPAPSLALLLEYMYSSNLPLTADNVQGISVAAFLLQMDDVFSRCQIYMIDNMDTTNCLGIYYYARDLGAEELADQAQRYLRQHFTEVCYGEEVLELEAHQLGALLSSDDLNVSREESILDVVMRWVKYCPGDVGSEEENRARHLPELLKKVRLPLVGVDYLKGTMKRNTALLVDAECLQIMEEAIEAASLDSDAPPRRLKLRYGMETTDLLLCIGNEGGGIRSRYGSYTERSFCYAPTTGRTLFITSPRYGEALGYVFAGVVTEKNEIVVSGELGARKMARHKDKNVEIFMYNKEAQGSWKHLSSAEYRDSYALSSLGENLYLIGGQMKLKNQYHITNSVERWSLQGGPWRSTAPLPMPLAYHSVVRMKGRLYVLGGRTPQSFRTDDEPDRMSNRLLEYDPETNKWNELGPMKFSKYRCSAVALNGEIYVLGGIGCEGVDRGQSRYCLNVVEIYNPDGDFWRDGPPLPWPLLTLRSNASNAGVVDGKLYVCGYYKGADRHDTITKDILQLDPWENVWTVVAKQALMHDSYDVCLVANLNPRGLMPPPADLVEE.

Residues 25–92 (TDVVLVAEGV…MYSSNLPLTA (68 aa)) form the BTB domain. In terms of domain architecture, BACK spans 127-236 (CLGIYYYARD…GVDYLKGTMK (110 aa)). Kelch repeat units lie at residues 390-440 (NLYL…RMKG), 441-496 (RLYV…ALNG), 498-551 (IYVL…ASNA), and 557-607 (KLYV…LVAN).

This chain is Kelch repeat and BTB domain-containing protein 12 (kbtbd12), found in Danio rerio (Zebrafish).